The primary structure comprises 86 residues: MDPYKVIIRPVITDKAISLIEKENKLTFIVDRRATKQDIKRAIEEIFNVKVEKVNTLITPKGEKKAYVKLKPEYSASEIAARLGLF.

It belongs to the universal ribosomal protein uL23 family. As to quaternary structure, part of the 50S ribosomal subunit. Contacts protein L29.

Binds to 23S rRNA. One of the proteins that surrounds the polypeptide exit tunnel on the outside of the ribosome. This Pyrococcus abyssi (strain GE5 / Orsay) protein is Large ribosomal subunit protein uL23.